We begin with the raw amino-acid sequence, 142 residues long: Potassium voltage-gated channel subfamily E regulatory beta subunit 5 (142 aa).

N-linked (GlcNAc...) asparagine glycosylation is found at Asn2 and Asn25. A helical membrane pass occupies residues 61–81; it reads LYILLIMIFYACLAGGLILAY. Over 82–142 the chain is Cytoplasmic; the sequence is TRSRKLVEAK…PALAQGAERV (61 aa). A disordered region spans residues 119-142; sequence SQAEGRRQLASEGLPALAQGAERV.

The protein belongs to the potassium channel KCNE family. Interacts with KCNQ1; impairs KCNQ1 localization in lipid rafts and only conducts current upon strong and continued depolarization. Highly expressed in heart, skeletal muscle, brain, spinal cord and placenta.

It is found in the membrane. In terms of biological role, potassium channel ancillary subunit that is essential for generation of some native K(+) currents by virtue of formation of heteromeric ion channel complex with voltage-gated potassium (Kv) channel pore-forming alpha subunits. Functions as an inhibitory beta-subunit of the repolarizing cardiac potassium ion channel KCNQ1. This is Potassium voltage-gated channel subfamily E regulatory beta subunit 5 (KCNE5) from Homo sapiens (Human).